The chain runs to 445 residues: UPF0210 protein SZO_15840 (445 aa).

Belongs to the UPF0210 family. Homodimer.

This is UPF0210 protein SZO_15840 from Streptococcus equi subsp. zooepidemicus (strain H70).